We begin with the raw amino-acid sequence, 501 residues long: Lysine--tRNA ligase (501 aa).

Positions 411 and 418 each coordinate Mg(2+).

Belongs to the class-II aminoacyl-tRNA synthetase family. Homodimer. Mg(2+) is required as a cofactor.

It is found in the cytoplasm. The enzyme catalyses tRNA(Lys) + L-lysine + ATP = L-lysyl-tRNA(Lys) + AMP + diphosphate. The chain is Lysine--tRNA ligase from Magnetococcus marinus (strain ATCC BAA-1437 / JCM 17883 / MC-1).